Consider the following 373-residue polypeptide: P2Y purinoceptor 1 (373 aa).

The Extracellular portion of the chain corresponds to 1-51 (MTEVLWPAVPNGTDTAFLADPGSPWGNSTVTSTAAVASPFKCALTKTGFQF). Residues N11 and N27 are each glycosylated (N-linked (GlcNAc...) asparagine). Disulfide bonds link C42-C296 and C124-C202. K46 contacts ADP. Residues 52 to 74 (YYLPAVYILVFIIGFLGNSVAIW) form a helical membrane-spanning segment. The Cytoplasmic portion of the chain corresponds to 75 to 87 (MFVFHMKPWSGIS). A helical membrane pass occupies residues 88-109 (VYMFNLALADFLYVLTLPALIF). The Extracellular segment spans residues 110-125 (YYFNKTDWIFGDAMCK). N113 is a glycosylation site (N-linked (GlcNAc...) asparagine). Residues 126–147 (LQRFIFHVNLYGSILFLTCISA) traverse the membrane as a helical segment. Over 148–166 (HRYSGVVYPLKSLGRLKKK) the chain is Cytoplasmic. Residues 167–188 (NAVYISVLVWLIVVVGISPILF) traverse the membrane as a helical segment. Topologically, residues 189 to 214 (YSGTGIRKNKTITCYDTTSDEYLRSY) are extracellular. Residue N197 is glycosylated (N-linked (GlcNAc...) asparagine). Residue 203 to 205 (YDT) participates in ADP binding. Residues 215–237 (FIYSMCTTVAMFCVPLVLILGCY) form a helical membrane-spanning segment. At 238–260 (GLIVRALIYKDLDNSPLRRKSIY) the chain is on the cytoplasmic side. A helical transmembrane segment spans residues 261–284 (LVIIVLTVFAVSYIPFHVMKTMNL). ADP-binding positions include 283–287 (NLRAR), 303–306 (YATY), and R310. The Extracellular segment spans residues 285–303 (RARLDFQTPEMCAFNDRVY). A helical membrane pass occupies residues 304–325 (ATYQVTRGLASLNSCVDPILYF). Residues 326–373 (LAGDTFRRRLSRATRKASRRSEANLQSKSEDMTLNILSEFKQNGDTSL) are Cytoplasmic-facing.

Belongs to the G-protein coupled receptor 1 family.

It is found in the cell membrane. Functionally, receptor for extracellular adenine nucleotides such as ADP. In platelets, binding to ADP leads to mobilization of intracellular calcium ions via activation of phospholipase C, a change in platelet shape, and ultimately platelet aggregation. The protein is P2Y purinoceptor 1 (P2RY1) of Bos taurus (Bovine).